The following is a 78-amino-acid chain: Defensin SD2 (78 aa).

An N-terminal signal peptide occupies residues 1–20 (MKSSMKMFAALLLVVMCLLA). Disulfide bonds link C34–C78, C45–C65, C51–C72, and C55–C74.

The protein belongs to the DEFL family. Highest expression in flowers and to a lesser extent in leaves. Lower levels in hypocotyls. No expression in roots and cotyledons.

The protein localises to the secreted. Its subcellular location is the cell wall. May play a protective role in flowers by protecting the reproductive organs from potential pathogen attack. This is Defensin SD2 (SD2) from Helianthus annuus (Common sunflower).